The primary structure comprises 141 residues: Protein GAT3 (141 aa).

The GATA-type zinc-finger motif lies at 72–98 (CPQCAVIKTSPQWREGPDGEVTLCNAC).

The protein is Protein GAT3 (GAT3) of Saccharomyces cerevisiae (strain ATCC 204508 / S288c) (Baker's yeast).